Here is a 266-residue protein sequence, read N- to C-terminus: Uracil-DNA glycosylase (266 aa).

The interval Met1–Thr25 is disordered. The active-site Proton acceptor is the Asp97.

It belongs to the uracil-DNA glycosylase (UDG) superfamily. UNG family.

It localises to the cytoplasm. It catalyses the reaction Hydrolyzes single-stranded DNA or mismatched double-stranded DNA and polynucleotides, releasing free uracil.. Excises uracil residues from the DNA which can arise as a result of misincorporation of dUMP residues by DNA polymerase or due to deamination of cytosine. The chain is Uracil-DNA glycosylase from Ralstonia nicotianae (strain ATCC BAA-1114 / GMI1000) (Ralstonia solanacearum).